We begin with the raw amino-acid sequence, 476 residues long: Protein DETOXIFICATION 1 (476 aa).

12 consecutive transmembrane segments (helical) span residues 35–55, 66–86, 117–137, 146–166, 184–204, 208–228, 260–280, 289–309, 331–351, 370–390, 402–422, and 433–453; these read AAPM…SVMV, GVAL…CGLV, IPIC…LISL, IAGS…IVIP, AVTT…LFGL, GPAM…SCYV, AAMI…SGLL, VLSI…GVAA, VLAG…LLFT, VADL…TAVL, IGAW…GIYL, and LWCG…IVTA.

Belongs to the multi antimicrobial extrusion (MATE) (TC 2.A.66.1) family. Ubiquitous. Highest expression in flowers and stems.

It localises to the cell membrane. Efflux carrier for plant-derived alkaloids, antibiotics, heavy metal and other toxic compounds. Involved in cadmium detoxification. Requires probably a proton-motive force for the efflux. The chain is Protein DETOXIFICATION 1 from Arabidopsis thaliana (Mouse-ear cress).